The chain runs to 196 residues: Mitochondrial intermembrane space cysteine motif-containing protein MIX23 (196 aa).

The short motif at cysteine 99–cysteine 114 is the Cx14C motif element. The short motif at cysteine 178–cysteine 192 is the Cx13C motif element.

Belongs to the MIX23 family.

It is found in the mitochondrion intermembrane space. Regulator of the mitochondrial protein import machinery that is localized in the mitochondrial intermembrane space (IMS) and facilitates the transport of proteins from the cytosol into the mitochondrial matrix. Not essential for mitochondrial protein import but induced and required when mitochondrial import is compromised. Stimulates or stabilizes the translocation into the mitochondria of proteins such as OXA1, ATP1 and COX12. The sequence is that of Mitochondrial intermembrane space cysteine motif-containing protein MIX23 from Saccharomyces cerevisiae (strain ATCC 204508 / S288c) (Baker's yeast).